Consider the following 322-residue polypeptide: uncharacterized protein (322 aa).

Residues 1 to 32 form the signal peptide; it reads MRDGIGKRAASALFLCGVLVMLAVSSAIVSSA.

This is an uncharacterized protein from Bacillus subtilis (strain 168).